The sequence spans 651 residues: Aspartate--tRNA ligase, mitochondrial (651 aa).

The N-terminal 44 residues, methionine 1 to phenylalanine 44, are a transit peptide targeting the mitochondrion. Residue threonine 216 is modified to Phosphothreonine. At serine 239 the chain carries Phosphoserine. The interval glutamine 241–lysine 244 is aspartate. Arginine 263 contributes to the L-aspartate binding site. Residue arginine 263–glutamate 265 participates in ATP binding. Lysine 379 carries the N6-acetyllysine modification. Residue glutamate 532 participates in ATP binding. Residue arginine 539 coordinates L-aspartate. Residue glycine 581–arginine 584 coordinates ATP.

This sequence belongs to the class-II aminoacyl-tRNA synthetase family. Type 1 subfamily. In terms of assembly, homodimer.

The protein resides in the mitochondrion matrix. It localises to the mitochondrion membrane. It catalyses the reaction tRNA(Asp) + L-aspartate + ATP = L-aspartyl-tRNA(Asp) + AMP + diphosphate. Functionally, catalyzes the attachment of aspartate to tRNA(Asp) in a two-step reaction: aspartate is first activated by ATP to form Asp-AMP and then transferred to the acceptor end of tRNA(Asp). This chain is Aspartate--tRNA ligase, mitochondrial (DARS2), found in Bos taurus (Bovine).